The chain runs to 299 residues: Very long chain fatty acid elongase 5 (299 aa).

Methionine 1 carries the N-acetylmethionine modification. The next 7 helical transmembrane spans lie at 26–46, 64–84, 112–132, 139–158, 168–187, 205–225, and 226–246; these read WFLL…LLIV, ILVV…CELV, VLWW…FFIL, ITVL…WFVM, FGAT…YGLS, GQLL…IWPC, and TFPL…IALF. The segment at 274–299 is disordered; sequence MAAVNGHTNSFSPLENNVKPRKLRKD. Polar residues predominate over residues 279-288; it reads GHTNSFSPLE. Phosphoserine is present on serine 285.

Belongs to the ELO family. ELOVL5 subfamily. In terms of assembly, interacts with TECR. Ubiquitous. Highly expressed in the adrenal gland and testis. Weakly expressed in prostate, lung and brain. Expressed in the cerebellum.

The protein localises to the endoplasmic reticulum membrane. It is found in the cell projection. It localises to the dendrite. It carries out the reaction a very-long-chain acyl-CoA + malonyl-CoA + H(+) = a very-long-chain 3-oxoacyl-CoA + CO2 + CoA. The catalysed reaction is (6Z,9Z,12Z)-octadecatrienoyl-CoA + malonyl-CoA + H(+) = (8Z,11Z,14Z)-3-oxoeicosatrienoyl-CoA + CO2 + CoA. The enzyme catalyses (9Z,12Z,15Z)-octadecatrienoyl-CoA + malonyl-CoA + H(+) = (11Z,14Z,17Z)-3-oxoeicosatrienoyl-CoA + CO2 + CoA. It catalyses the reaction (9Z)-hexadecenoyl-CoA + malonyl-CoA + H(+) = 3-oxo-(11Z)-octadecenoyl-CoA + CO2 + CoA. It carries out the reaction (9Z)-octadecenoyl-CoA + malonyl-CoA + H(+) = 3-oxo-(11Z)-eicosenoyl-CoA + CO2 + CoA. The catalysed reaction is (11Z)-octadecenoyl-CoA + malonyl-CoA + H(+) = 3-oxo-(13Z)-eicosenoyl-CoA + CO2 + CoA. The enzyme catalyses (9Z,12Z)-octadecadienoyl-CoA + malonyl-CoA + H(+) = (11Z,14Z)-3-oxoicosa-11,14-dienoyl-CoA + CO2 + CoA. It catalyses the reaction (6Z,9Z,12Z,15Z)-octadecatetraenoyl-CoA + malonyl-CoA + H(+) = (8Z,11Z,14Z,17Z)-3-oxoicosatetraenoyl-CoA + CO2 + CoA. It carries out the reaction (5Z,8Z,11Z,14Z)-eicosatetraenoyl-CoA + malonyl-CoA + H(+) = (7Z,10Z,13Z,16Z)-3-oxodocosatetraenoyl-CoA + CO2 + CoA. The catalysed reaction is (5Z,8Z,11Z,14Z,17Z)-eicosapentaenoyl-CoA + malonyl-CoA + H(+) = 3-oxo-(7Z,10Z,13Z,16Z,19Z)-docosapentaenoyl-CoA + CO2 + CoA. It functions in the pathway lipid metabolism; polyunsaturated fatty acid biosynthesis. In terms of biological role, catalyzes the first and rate-limiting reaction of the four reactions that constitute the long-chain fatty acids elongation cycle. This endoplasmic reticulum-bound enzymatic process allows the addition of 2 carbons to the chain of long- and very long-chain fatty acids (VLCFAs) per cycle. Condensing enzyme that acts specifically toward polyunsaturated acyl-CoA with the higher activity toward C18:3(n-6) acyl-CoA. May participate in the production of monounsaturated and of polyunsaturated VLCFAs of different chain lengths that are involved in multiple biological processes as precursors of membrane lipids and lipid mediators. In conditions where the essential linoleic and alpha linoleic fatty acids are lacking it is also involved in the synthesis of Mead acid from oleic acid. The sequence is that of Very long chain fatty acid elongase 5 from Homo sapiens (Human).